A 260-amino-acid chain; its full sequence is UPF0758 protein Smed_1459 (260 aa).

One can recognise an MPN domain in the interval 138–260; it reads VLSSWSAVID…HVSLKGLQLF (123 aa). The Zn(2+) site is built by His-209, His-211, and Asp-222. The short motif at 209-222 is the JAMM motif element; sequence HNHPSGDPTPSCAD.

It belongs to the UPF0758 family.

This Sinorhizobium medicae (strain WSM419) (Ensifer medicae) protein is UPF0758 protein Smed_1459.